The sequence spans 192 residues: Iron sulfur cluster assembly protein 1, mitochondrial (192 aa).

The transit peptide at 1–53 (MSVFRRSVQCVGVLPSILAQRSSLLARPANLQFLKTNSSKFVPQVTANVSRRM) directs the protein to the mitochondrion.

It belongs to the NifU family. As to quaternary structure, homodimer. Component of the core Fe-S cluster (ISC) assembly machinery. The cofactor is [2Fe-2S] cluster.

It localises to the mitochondrion. The protein resides in the mitochondrion matrix. It participates in cofactor biosynthesis; iron-sulfur cluster biosynthesis. In terms of biological role, scaffold protein for the de novo synthesis of iron-sulfur (Fe-S) clusters within mitochondria, which is required for maturation of both mitochondrial and cytoplasmic [2Fe-2S] and [4Fe-4S] proteins. First, a [2Fe-2S] cluster is transiently assembled on the scaffold protein isu1. In a second step, the cluster is released from isu1, transferred to a glutaredoxin, followed by the formation of mitochondrial [2Fe-2S] proteins, the synthesis of [4Fe-4S] clusters and their target-specific insertion into the recipient apoproteins. Cluster assembly on isu1 depends on the function of the cysteine desulfurase complex nfs1-isd11, which serves as the sulfur donor for cluster synthesis, the iron-binding protein frataxin as the putative iron donor, and the electron transfer chain comprised of ferredoxin reductase and ferredoxin, which receive their electrons from NADH. The protein is Iron sulfur cluster assembly protein 1, mitochondrial (isu1) of Schizosaccharomyces pombe (strain 972 / ATCC 24843) (Fission yeast).